Reading from the N-terminus, the 388-residue chain is ATP phosphoribosyltransferase regulatory subunit (388 aa).

This sequence belongs to the class-II aminoacyl-tRNA synthetase family. HisZ subfamily. Heteromultimer composed of HisG and HisZ subunits.

It is found in the cytoplasm. It functions in the pathway amino-acid biosynthesis; L-histidine biosynthesis; L-histidine from 5-phospho-alpha-D-ribose 1-diphosphate: step 1/9. In terms of biological role, required for the first step of histidine biosynthesis. May allow the feedback regulation of ATP phosphoribosyltransferase activity by histidine. This chain is ATP phosphoribosyltransferase regulatory subunit, found in Acinetobacter baumannii (strain AB307-0294).